Consider the following 329-residue polypeptide: Diaminopimelate epimerase (329 aa).

Positions 14 and 73 each coordinate substrate. Catalysis depends on cysteine 82, which acts as the Proton donor. Substrate is bound by residues 83-84, asparagine 170, asparagine 206, and 224-225; these read GN and ER. Cysteine 233 (proton acceptor) is an active-site residue. Residue 234-235 coordinates substrate; sequence GT.

Belongs to the diaminopimelate epimerase family. In terms of assembly, homodimer.

The protein resides in the cytoplasm. The catalysed reaction is (2S,6S)-2,6-diaminopimelate = meso-2,6-diaminopimelate. It functions in the pathway amino-acid biosynthesis; L-lysine biosynthesis via DAP pathway; DL-2,6-diaminopimelate from LL-2,6-diaminopimelate: step 1/1. Functionally, catalyzes the stereoinversion of LL-2,6-diaminopimelate (L,L-DAP) to meso-diaminopimelate (meso-DAP), a precursor of L-lysine and an essential component of the bacterial peptidoglycan. The sequence is that of Diaminopimelate epimerase from Listeria monocytogenes serovar 1/2a (strain ATCC BAA-679 / EGD-e).